Consider the following 440-residue polypeptide: NADH-quinone oxidoreductase subunit D 1 (440 aa).

It belongs to the complex I 49 kDa subunit family. NDH-1 is composed of 14 different subunits. Subunits NuoB, C, D, E, F, and G constitute the peripheral sector of the complex.

It is found in the cell membrane. It catalyses the reaction a quinone + NADH + 5 H(+)(in) = a quinol + NAD(+) + 4 H(+)(out). NDH-1 shuttles electrons from NADH, via FMN and iron-sulfur (Fe-S) centers, to quinones in the respiratory chain. The immediate electron acceptor for the enzyme in this species is believed to be a menaquinone. Couples the redox reaction to proton translocation (for every two electrons transferred, four hydrogen ions are translocated across the cytoplasmic membrane), and thus conserves the redox energy in a proton gradient. The chain is NADH-quinone oxidoreductase subunit D 1 from Streptomyces griseus subsp. griseus (strain JCM 4626 / CBS 651.72 / NBRC 13350 / KCC S-0626 / ISP 5235).